The following is a 449-amino-acid chain: 3-phosphoshikimate 1-carboxyvinyltransferase (449 aa).

Residues lysine 28, serine 29, and arginine 33 each contribute to the 3-phosphoshikimate site. Phosphoenolpyruvate is bound at residue lysine 28. The phosphoenolpyruvate site is built by glycine 105 and arginine 133. Residues serine 179, glutamine 181, aspartate 332, and lysine 359 each coordinate 3-phosphoshikimate. Glutamine 181 contributes to the phosphoenolpyruvate binding site. Aspartate 332 (proton acceptor) is an active-site residue. Phosphoenolpyruvate-binding residues include arginine 363 and arginine 406.

Belongs to the EPSP synthase family. Monomer.

Its subcellular location is the cytoplasm. The catalysed reaction is 3-phosphoshikimate + phosphoenolpyruvate = 5-O-(1-carboxyvinyl)-3-phosphoshikimate + phosphate. It participates in metabolic intermediate biosynthesis; chorismate biosynthesis; chorismate from D-erythrose 4-phosphate and phosphoenolpyruvate: step 6/7. Its function is as follows. Catalyzes the transfer of the enolpyruvyl moiety of phosphoenolpyruvate (PEP) to the 5-hydroxyl of shikimate-3-phosphate (S3P) to produce enolpyruvyl shikimate-3-phosphate and inorganic phosphate. The chain is 3-phosphoshikimate 1-carboxyvinyltransferase from Nitrobacter hamburgensis (strain DSM 10229 / NCIMB 13809 / X14).